A 384-amino-acid polypeptide reads, in one-letter code: tRNA-specific 2-thiouridylase MnmA (384 aa).

Residues 9 to 16 (GMSGGVDS) and Met35 each bind ATP. The tract at residues 95-97 (NPD) is interaction with target base in tRNA. Cys100 serves as the catalytic Nucleophile. Cys100 and Cys196 form a disulfide bridge. Gly124 is a binding site for ATP. Residues 146–148 (KDQ) form an interaction with tRNA region. Cys196 functions as the Cysteine persulfide intermediate in the catalytic mechanism. Residues 308-309 (RY) are interaction with tRNA.

Belongs to the MnmA/TRMU family.

The protein localises to the cytoplasm. It catalyses the reaction S-sulfanyl-L-cysteinyl-[protein] + uridine(34) in tRNA + AH2 + ATP = 2-thiouridine(34) in tRNA + L-cysteinyl-[protein] + A + AMP + diphosphate + H(+). Functionally, catalyzes the 2-thiolation of uridine at the wobble position (U34) of tRNA, leading to the formation of s(2)U34. This is tRNA-specific 2-thiouridylase MnmA from Burkholderia ambifaria (strain ATCC BAA-244 / DSM 16087 / CCUG 44356 / LMG 19182 / AMMD) (Burkholderia cepacia (strain AMMD)).